A 500-amino-acid chain; its full sequence is L-arabinose isomerase (500 aa).

Positions 306, 333, 350, and 450 each coordinate Mn(2+).

It belongs to the arabinose isomerase family. Homohexamer. It depends on Mn(2+) as a cofactor.

It carries out the reaction beta-L-arabinopyranose = L-ribulose. It participates in carbohydrate degradation; L-arabinose degradation via L-ribulose; D-xylulose 5-phosphate from L-arabinose (bacterial route): step 1/3. Catalyzes the conversion of L-arabinose to L-ribulose. The chain is L-arabinose isomerase from Klebsiella pneumoniae subsp. pneumoniae (strain ATCC 700721 / MGH 78578).